We begin with the raw amino-acid sequence, 1637 residues long: Glutamate rich 3 (1637 aa).

Disordered regions lie at residues 145 to 192, 408 to 453, 478 to 814, 1111 to 1194, 1238 to 1445, and 1457 to 1637; these read PLTL…GSLL, PSST…KESC, EWKG…QDAG, VGTS…SPRE, IEKV…SGER, and KAEN…RETA. Polar residues predominate over residues 169 to 185; sequence LLSSRQTRNGSKITSGS. Composition is skewed to basic and acidic residues over residues 416-426, 443-452, and 478-487; these read EKITEKKEEPP, KRNEMERKES, and EWKGKSGRDV. Residues 500–523 are compositionally biased toward acidic residues; it reads YEEDFEVDDEKQDEKVDEDEDQAD. Over residues 534 to 557 the composition is skewed to basic and acidic residues; sequence TESEKDNRNPEKKIETSSEKAHDS. A compositionally biased stretch (acidic residues) spans 558 to 572; sequence ENEDTGCSDSEEDDR. Composition is skewed to low complexity over residues 579–590 and 608–617; these read SSISSRSHPYSS and EEGSSRSSSS. Composition is skewed to basic and acidic residues over residues 619–638, 677–693, 769–802, 1115–1130, 1264–1307, 1319–1329, 1342–1357, and 1402–1412; these read DLRENDDPGKPHFPIEKYLE, ESEHKEPRRVASSEVRA, QEMHTLKEEAMKKDESSQPEDTDAHAGVREESGM, EVKEAEREVGSPKTDG, LKTE…KDVE, KLLEDPPKERA, SPKESEATATEHKGGE, and RCEEWAAKELD. Residues 1476–1487 are compositionally biased toward polar residues; it reads VTGSLTGQNWNM. 3 stretches are compositionally biased toward basic and acidic residues: residues 1550 to 1568, 1589 to 1599, and 1614 to 1637; these read AEERTGTEDMAPRTEKVAV, AQDREGGETKA, and GKDEEHQSGAAEEFRESVSQRETA.

It is found in the cell projection. Its subcellular location is the cilium. It localises to the cytoplasm. Its function is as follows. Component of the primary cilium that controls cilium formation and length. May function within retrograde intraflagellar transport (IFT)-associated pathways to remove signaling proteins from primary cilia. Also involved in neuronal vesicle biogenesis and neurotransmitter vesicular function. This chain is Glutamate rich 3, found in Mus musculus (Mouse).